The primary structure comprises 691 residues: MNKNFSSMIDRYKHQQLRIGLVSPQQISAWATKILPNGEIVGEVKKPYTFLYKTNKPEKDGLFCERIFGPIKSGICACGNYRVIGDEKEEPKFCEQCGVEFVDSRIRRYRMGCIKLACPVTHVWYLKRLPSYIANILDKPIKELEGLVYCDFYFARPITKKPTFLRLRGLLKYEIQSWKSSIPLFFTTQGFDTFRNREISTGAGAIREQLADLDLKISLENSLLEWKYLGEEERIGNEWEDRKAGRRKGFLVRRMELVKHFIRTNIEPEWMVLSLLPVLPPELRPIIQIDGGKLMSSDINELYRRVIYRNNTLTDLLTTSRSTPGELVMCQEKLVQEAVDTLLDNGIRGQPMRDGHNKVYKSFSDIIEGKEGRFRETLLGKRVDYSGRSVIVVGPSLSLHRCGLPRKIAIELFQPFVIRDLIRQHLASNIGVAKSKIREKEPIIWEILQEVMRGHPVLLNRAPTLHRLGIQAFQPVLVEGHVLCLHPLVCKGFNADFDGDQMAVHVPLSLEAQAEARLLMFSHMNLLSPAIGDPISVPTQDMLIGLYVLTSDNRRDICTNRYTKCNIQTLQTKSSDSSNSKSKNWYKNRPFFCNSYDAIGAYRQKQINLESPLWLRWRLDRRVITSSETPIEVHYESRGTFSEIYGHFLIVRSLKKKILFIYLRTTVGHISLYREIEEAIQGFSRAWSSDT.

It belongs to the RNA polymerase beta' chain family. RpoC1 subfamily. In plastids the minimal PEP RNA polymerase catalytic core is composed of four subunits: alpha, beta, beta', and beta''. When a (nuclear-encoded) sigma factor is associated with the core the holoenzyme is formed, which can initiate transcription.

Its subcellular location is the plastid. It carries out the reaction RNA(n) + a ribonucleoside 5'-triphosphate = RNA(n+1) + diphosphate. DNA-dependent RNA polymerase catalyzes the transcription of DNA into RNA using the four ribonucleoside triphosphates as substrates. The sequence is that of DNA-directed RNA polymerase subunit beta' (rpoC1) from Cuscuta reflexa (Southern Asian dodder).